The following is a 661-amino-acid chain: CD180 antigen (661 aa).

The N-terminal stretch at 1–23 is a signal peptide; sequence MAFDVSCFFWVVLFSAGCKVITS. At 24 to 626 the chain is on the extracellular side; it reads WDQMCIEKEA…KLSDVKLSCG (603 aa). Positions 33–53 constitute an LRRNT domain; sequence ANKTYNCENLGLSEIPDTLPN. 4 N-linked (GlcNAc...) asparagine glycosylation sites follow: Asn-34, Asn-53, Asn-70, and Asn-78. 7 LRR repeats span residues 54–75, 78–99, 102–123, 126–147, 150–171, 174–195, and 201–221; these read TTEF…TFSR, NLTF…TFQS, QLST…SLNG, SLKH…PVHN, NLES…KDFP, NLKV…DMRS, and NLSL…AFDS. 3 N-linked (GlcNAc...) asparagine glycosylation sites follow: Asn-201, Asn-234, and Asn-244. LRR repeat units lie at residues 275–296, 299–320, 322–343, 346–366, and 371–391; these read SVES…TFQC, QLQE…MKGL, LLKK…SAAN, SLTH…VGCL, and NLQT…CSLQ. N-linked (GlcNAc...) asparagine glycosylation is found at Asn-394 and Asn-402. LRR repeat units lie at residues 397–418, 421–442, 446–466, 470–493, 497–518, 521–544, and 546–564; these read HLQT…AFKE, QLEL…SPFQ, FLQV…HLLA, VLRH…NLLQ, SLEV…AFHS, KMSH…SHLK, and IYLN…RLLP. N-linked (GlcNAc...) asparagine glycosylation is present at Asn-451. A glycan (N-linked (GlcNAc...) asparagine) is linked at Asn-573. The LRRCT domain occupies 577 to 627; it reads NPLDCTCSNIHFLTWYKENLHKLEGSEETTCANPPSLRGVKLSDVKLSCGI. The helical transmembrane segment at 627–650 threads the bilayer; sequence ITAIGIFFLIVFLLLLAILLFFAV. The Cytoplasmic portion of the chain corresponds to 651–661; that stretch reads KYLLRWKYQHI.

The protein belongs to the Toll-like receptor family. In terms of assembly, M-shaped tetramer of two CD180-LY86 heterodimers. In terms of tissue distribution, expressed mainly on mature peripherical B cells. Detected in spleen, lymph node and appendix. Not detected in pre-B and -T cells.

Its subcellular location is the cell membrane. May cooperate with MD-1 and TLR4 to mediate the innate immune response to bacterial lipopolysaccharide (LPS) in B-cells. Leads to NF-kappa-B activation. Also involved in the life/death decision of B-cells. The sequence is that of CD180 antigen (CD180) from Homo sapiens (Human).